A 915-amino-acid chain; its full sequence is Alanine--tRNA ligase (915 aa).

Residues histidine 605, histidine 609, cysteine 709, and histidine 713 each contribute to the Zn(2+) site. Residues 882-901 (GGGGDERLAQGGGRNPDGLT) form a disordered region.

It belongs to the class-II aminoacyl-tRNA synthetase family. Zn(2+) serves as cofactor.

The protein resides in the cytoplasm. It carries out the reaction tRNA(Ala) + L-alanine + ATP = L-alanyl-tRNA(Ala) + AMP + diphosphate. Its function is as follows. Catalyzes the attachment of alanine to tRNA(Ala) in a two-step reaction: alanine is first activated by ATP to form Ala-AMP and then transferred to the acceptor end of tRNA(Ala). Also edits incorrectly charged Ser-tRNA(Ala) and Gly-tRNA(Ala) via its editing domain. The polypeptide is Alanine--tRNA ligase (Methanopyrus kandleri (strain AV19 / DSM 6324 / JCM 9639 / NBRC 100938)).